The sequence spans 292 residues: Probable E3 ubiquitin-protein ligase RNF144A (292 aa).

Residues 16 to 236 are TRIAD supradomain; it reads PLVSCKLCLG…YDKGPCRNKL (221 aa). Zn(2+)-binding residues include Cys-20, Cys-23, Cys-43, Cys-46, Cys-111, Cys-116, Cys-135, Cys-138, Cys-143, Cys-146, His-151, Cys-156, Cys-185, and Cys-188. The RING-type 1 zinc-finger motif lies at 20–70; it reads CKLCLGEYTVEQMTTIAQCQCIFCTLCLKQYVELLIKEGLETAISCPDASC. An IBR-type zinc finger spans residues 91-156; that stretch reads QKYKKLQFEK…KANWHPGQGC (66 aa). The RING-type 2; atypical zinc finger occupies 185–214; that stretch reads CPKCKVYIERDEGCAQMMCKNCKHAFCWYC. The active site involves Cys-198. Residues Cys-203, Cys-206, Cys-211, Cys-214, His-226, and Cys-232 each contribute to the Zn(2+) site. Residues 250 to 270 form a helical membrane-spanning segment; sequence VVGIFAGFGLLLLVASPFLLL.

The protein belongs to the RBR family. RNF144 subfamily.

It localises to the membrane. It carries out the reaction [E2 ubiquitin-conjugating enzyme]-S-ubiquitinyl-L-cysteine + [acceptor protein]-L-lysine = [E2 ubiquitin-conjugating enzyme]-L-cysteine + [acceptor protein]-N(6)-ubiquitinyl-L-lysine.. It functions in the pathway protein modification; protein ubiquitination. Functionally, E3 ubiquitin-protein ligase which accepts ubiquitin from E2 ubiquitin-conjugating enzymes ube2l3 and ube2l6 in the form of a thioester and then directly transfers the ubiquitin to targeted substrates. The protein is Probable E3 ubiquitin-protein ligase RNF144A (rnf144a) of Xenopus tropicalis (Western clawed frog).